The sequence spans 361 residues: Phospho-N-acetylmuramoyl-pentapeptide-transferase (361 aa).

10 helical membrane passes run 27–47 (GAFF…INLL), 72–92 (TPTM…LLWA), 98–118 (YVWL…MDDF), 135–155 (LAMG…LHPE), 169–189 (TLIN…AGSA), 200–220 (GLAI…AYAV), 240–260 (IFVF…YNAP), 263–283 (AVFM…AIAV), 289–309 (IVLV…IIQV), and 338–358 (QIVI…LATL).

This sequence belongs to the glycosyltransferase 4 family. MraY subfamily. Mg(2+) is required as a cofactor.

It is found in the cell inner membrane. The catalysed reaction is UDP-N-acetyl-alpha-D-muramoyl-L-alanyl-gamma-D-glutamyl-meso-2,6-diaminopimeloyl-D-alanyl-D-alanine + di-trans,octa-cis-undecaprenyl phosphate = di-trans,octa-cis-undecaprenyl diphospho-N-acetyl-alpha-D-muramoyl-L-alanyl-D-glutamyl-meso-2,6-diaminopimeloyl-D-alanyl-D-alanine + UMP. Its pathway is cell wall biogenesis; peptidoglycan biosynthesis. Functionally, catalyzes the initial step of the lipid cycle reactions in the biosynthesis of the cell wall peptidoglycan: transfers peptidoglycan precursor phospho-MurNAc-pentapeptide from UDP-MurNAc-pentapeptide onto the lipid carrier undecaprenyl phosphate, yielding undecaprenyl-pyrophosphoryl-MurNAc-pentapeptide, known as lipid I. This chain is Phospho-N-acetylmuramoyl-pentapeptide-transferase, found in Dinoroseobacter shibae (strain DSM 16493 / NCIMB 14021 / DFL 12).